The following is a 538-amino-acid chain: Bifunctional purine biosynthesis protein PurH (538 aa).

The MGS-like domain occupies 8 to 158; the sequence is FPIPDLHRVR…KNHVYTGVIT (151 aa).

It belongs to the PurH family.

The enzyme catalyses (6R)-10-formyltetrahydrofolate + 5-amino-1-(5-phospho-beta-D-ribosyl)imidazole-4-carboxamide = 5-formamido-1-(5-phospho-D-ribosyl)imidazole-4-carboxamide + (6S)-5,6,7,8-tetrahydrofolate. The catalysed reaction is IMP + H2O = 5-formamido-1-(5-phospho-D-ribosyl)imidazole-4-carboxamide. It participates in purine metabolism; IMP biosynthesis via de novo pathway; 5-formamido-1-(5-phospho-D-ribosyl)imidazole-4-carboxamide from 5-amino-1-(5-phospho-D-ribosyl)imidazole-4-carboxamide (10-formyl THF route): step 1/1. The protein operates within purine metabolism; IMP biosynthesis via de novo pathway; IMP from 5-formamido-1-(5-phospho-D-ribosyl)imidazole-4-carboxamide: step 1/1. The chain is Bifunctional purine biosynthesis protein PurH from Bartonella henselae (strain ATCC 49882 / DSM 28221 / CCUG 30454 / Houston 1) (Rochalimaea henselae).